Consider the following 204-residue polypeptide: N-(5'-phosphoribosyl)anthranilate isomerase (204 aa).

This sequence belongs to the TrpF family.

It carries out the reaction N-(5-phospho-beta-D-ribosyl)anthranilate = 1-(2-carboxyphenylamino)-1-deoxy-D-ribulose 5-phosphate. It functions in the pathway amino-acid biosynthesis; L-tryptophan biosynthesis; L-tryptophan from chorismate: step 3/5. This is N-(5'-phosphoribosyl)anthranilate isomerase from Oceanobacillus iheyensis (strain DSM 14371 / CIP 107618 / JCM 11309 / KCTC 3954 / HTE831).